A 130-amino-acid polypeptide reads, in one-letter code: Small ribosomal subunit protein uS9 (130 aa).

The protein belongs to the universal ribosomal protein uS9 family.

This is Small ribosomal subunit protein uS9 from Pseudomonas fluorescens (strain Pf0-1).